The chain runs to 95 residues: Exodeoxyribonuclease 7 small subunit (95 aa).

The disordered stretch occupies residues 65 to 95 (ETINPAETARPAKPENAPESPRMNDLFGTES).

Belongs to the XseB family. Heterooligomer composed of large and small subunits.

The protein resides in the cytoplasm. It carries out the reaction Exonucleolytic cleavage in either 5'- to 3'- or 3'- to 5'-direction to yield nucleoside 5'-phosphates.. Functionally, bidirectionally degrades single-stranded DNA into large acid-insoluble oligonucleotides, which are then degraded further into small acid-soluble oligonucleotides. The sequence is that of Exodeoxyribonuclease 7 small subunit from Chlorobaculum tepidum (strain ATCC 49652 / DSM 12025 / NBRC 103806 / TLS) (Chlorobium tepidum).